Reading from the N-terminus, the 215-residue chain is Fibrillarin-like rRNA/tRNA 2'-O-methyltransferase (215 aa).

The tract at residues 1-29 (MKASSSLPDGVQRRQFDNRSRLTTHGTTV) is disordered. Over residues 11-20 (VQRRQFDNRS) the composition is skewed to basic and acidic residues. Residues 76 to 77 (TT), 92 to 93 (EF), 117 to 118 (DA), and 138 to 141 (DVAT) contribute to the S-adenosyl-L-methionine site.

This sequence belongs to the methyltransferase superfamily. Fibrillarin family. In terms of assembly, interacts with nop5. Component of box C/D small ribonucleoprotein (sRNP) particles that contain rpl7ae, FlpA and nop5, plus a guide RNA.

Involved in pre-rRNA and tRNA processing. Utilizes the methyl donor S-adenosyl-L-methionine to catalyze the site-specific 2'-hydroxyl methylation of ribose moieties in rRNA and tRNA. Site specificity is provided by a guide RNA that base pairs with the substrate. Methylation occurs at a characteristic distance from the sequence involved in base pairing with the guide RNA. The polypeptide is Fibrillarin-like rRNA/tRNA 2'-O-methyltransferase (Haloquadratum walsbyi (strain DSM 16790 / HBSQ001)).